Reading from the N-terminus, the 26-residue chain is Morintide mO4 (26 aa).

In terms of domain architecture, Chitin-binding type-1 spans 1–26 (NRLCCSQYGFCGTTSEYCSRVSGCQS). Cys-4 and Cys-18 are oxidised to a cystine.

In terms of tissue distribution, seeds (at protein level).

Chitin-binding protein which functions in defense against chitin-containing fungal pathogens. The chain is Morintide mO4 from Moringa oleifera (Horseradish tree).